Here is a 426-residue protein sequence, read N- to C-terminus: Enolase (426 aa).

G41 contacts phosphoenolpyruvate. S43 is a Mg(2+) binding site. Residue E165 participates in phosphoenolpyruvate binding. 2 residues coordinate (2R)-2-phosphoglycerate: E165 and E206. The active-site Proton donor is E206. D243, E286, and D313 together coordinate Mg(2+). 5 residues coordinate phosphoenolpyruvate: D313, K338, R367, S368, and K389. (2R)-2-phosphoglycerate contacts are provided by K338, R367, and S368. Catalysis depends on K338, which acts as the Proton acceptor.

Belongs to the enolase family. In terms of assembly, homodimer. Mg(2+) serves as cofactor.

The protein localises to the cytoplasm. The protein resides in the secreted. It localises to the cell surface. The enzyme catalyses (2R)-2-phosphoglycerate = phosphoenolpyruvate + H2O. It functions in the pathway carbohydrate degradation; glycolysis; pyruvate from D-glyceraldehyde 3-phosphate: step 4/5. In terms of biological role, catalyzes the reversible conversion of 2-phosphoglycerate (2-PG) into phosphoenolpyruvate (PEP). It is essential for the degradation of carbohydrates via glycolysis. This is Enolase from Chloroflexus aurantiacus (strain ATCC 29366 / DSM 635 / J-10-fl).